Consider the following 380-residue polypeptide: 1-deoxy-D-xylulose 5-phosphate reductoisomerase (380 aa).

Positions 10, 11, 12, 13, 36, 37, 38, and 120 each coordinate NADPH. Lys-121 is a 1-deoxy-D-xylulose 5-phosphate binding site. Position 122 (Glu-122) interacts with NADPH. Residue Asp-146 coordinates Mn(2+). 1-deoxy-D-xylulose 5-phosphate is bound by residues Ser-147, Glu-148, Ser-172, and His-195. A Mn(2+)-binding site is contributed by Glu-148. Gly-201 provides a ligand contact to NADPH. 4 residues coordinate 1-deoxy-D-xylulose 5-phosphate: Ser-208, Asn-213, Lys-214, and Glu-217. Residue Glu-217 coordinates Mn(2+).

The protein belongs to the DXR family. Requires Mg(2+) as cofactor. Mn(2+) serves as cofactor.

The enzyme catalyses 2-C-methyl-D-erythritol 4-phosphate + NADP(+) = 1-deoxy-D-xylulose 5-phosphate + NADPH + H(+). It functions in the pathway isoprenoid biosynthesis; isopentenyl diphosphate biosynthesis via DXP pathway; isopentenyl diphosphate from 1-deoxy-D-xylulose 5-phosphate: step 1/6. In terms of biological role, catalyzes the NADPH-dependent rearrangement and reduction of 1-deoxy-D-xylulose-5-phosphate (DXP) to 2-C-methyl-D-erythritol 4-phosphate (MEP). This chain is 1-deoxy-D-xylulose 5-phosphate reductoisomerase, found in Bacillus cereus (strain Q1).